We begin with the raw amino-acid sequence, 359 residues long: Threonine dehydratase biosynthetic, chloroplastic (359 aa).

ACT-like domains are found at residues 184-256 (ALLA…NFSH) and 278-349 (IFGE…LDNS).

Belongs to the serine/threonine dehydratase family. Homotetramer. The cofactor is pyridoxal 5'-phosphate. Floral buds of untreated plants. After ABA treatment or mechanical wounding is mostly accumulated in leaves, to a lesser extent in stems, but not in roots. Expressed in anthers, carpel leaves, pith cells, sepals and petals. Not expressed in stomium, vascular bundles, epidermal cells or pollen mother cells.

Its subcellular location is the plastid. The protein resides in the chloroplast. It carries out the reaction L-threonine = 2-oxobutanoate + NH4(+). It participates in amino-acid biosynthesis; L-isoleucine biosynthesis; 2-oxobutanoate from L-threonine: step 1/1. This is Threonine dehydratase biosynthetic, chloroplastic from Solanum tuberosum (Potato).